A 234-amino-acid chain; its full sequence is Ubiquitin domain-containing protein 1 (234 aa).

Residues 1–47 (MGGCVGTHHDSSGSLNENSDGTGVALGRNQPLKKDKPKWKSDYPMTD) are disordered. Over residues 12-21 (SGSLNENSDG) the composition is skewed to polar residues. Basic and acidic residues predominate over residues 32-41 (LKKDKPKWKS). The Ubiquitin-like domain occupies 152 to 227 (CQLRLRLSTG…VQVIVSQPIP (76 aa)).

In terms of biological role, may be involved in the regulation of cellular senescence through a positive feedback loop with TP53. The sequence is that of Ubiquitin domain-containing protein 1 (ubtd1) from Xenopus laevis (African clawed frog).